Reading from the N-terminus, the 455-residue chain is MKQAVFKSTALKKPADKTFSLFSLTWPIFIEVSLYMFMGNADTLMLSQYSDNSVAAVGVSNQILNLIIVMFSFIATGTTVIISQFLGSRQKKEAMEVAYVSIGANFFISLAISAVVFFAAVPLLHMMGLSDALMPDAKVFLQVVGGLSFIQALIMTFSAILKSYGYTKDTMFVTIGMNILNIAGNFVVIFGLFGFPVLGVAGVAMSTSIARVIGLIAMIVIVNKRIQLKMSLKKVFHMHKEHLRKLLKIGIPSAGEQLSYNLSQMIVTYFIAIMGAQALTTKVYTQNITMFILLFGTAISQGTQILIGRYIGGKQFDAAYERCMKSLYWALGIAAATSVLMTIFSKDLIGLFTQSPDIIATASLLIAMTIILEPGRSFNVIIINSLRAAGDAKFPVYMAMISMWGIGLPLAYLFGIHLGFGLAGIWISFIADEWVRGILMYRRWRSRIWIQKGMA.

12 consecutive transmembrane segments (helical) span residues 19–39, 63–83, 106–126, 140–160, 173–195, 200–222, 265–285, 288–308, 324–344, 348–368, 388–408, and 410–430; these read FSLF…MFMG, ILNL…VIIS, FFIS…LLHM, FLQV…FSAI, VTIG…LFGF, VAGV…IVIV, MIVT…KVYT, ITMF…ILIG, MKSL…MTIF, LIGL…LIAM, AAGD…GIGL, and LAYL…ISFI.

The protein belongs to the multi antimicrobial extrusion (MATE) (TC 2.A.66.1) family.

Its subcellular location is the cell membrane. This is an uncharacterized protein from Bacillus subtilis (strain 168).